We begin with the raw amino-acid sequence, 87 residues long: DNA-directed RNA polymerase subunit omega (87 aa).

Belongs to the RNA polymerase subunit omega family. As to quaternary structure, the RNAP catalytic core consists of 2 alpha, 1 beta, 1 beta' and 1 omega subunit. When a sigma factor is associated with the core the holoenzyme is formed, which can initiate transcription.

The catalysed reaction is RNA(n) + a ribonucleoside 5'-triphosphate = RNA(n+1) + diphosphate. Functionally, promotes RNA polymerase assembly. Latches the N- and C-terminal regions of the beta' subunit thereby facilitating its interaction with the beta and alpha subunits. This Azotobacter vinelandii (strain DJ / ATCC BAA-1303) protein is DNA-directed RNA polymerase subunit omega.